The sequence spans 743 residues: Apo-petrobactin exporter (743 aa).

12 helical membrane passes run 20–40, 199–219, 223–243, 258–278, 303–323, 337–357, 406–426, 561–581, 584–604, 613–633, 672–692, and 694–714; these read WITL…LPQV, ADVK…ILLY, ILAI…SPTL, AISI…LFLI, GGAI…LLLA, VAVF…LLIF, WTII…VPRI, DEAV…LVYL, IVAM…ALGA, MGAP…LVAL, AGLI…QVLV, and FGIV…PLLV.

The protein belongs to the resistance-nodulation-cell division (RND) (TC 2.A.6) family. MmpL subfamily.

It localises to the cell membrane. Exports the siderophore petrobactin. In Bacillus anthracis, this protein is Apo-petrobactin exporter.